We begin with the raw amino-acid sequence, 265 residues long: Zwei Ig domain protein zig-1 (265 aa).

Residues 1-17 (MKNLLLITFFVVSTVTA) form the signal peptide. The Extracellular segment spans residues 18-232 (LGGRGSKSAL…KMVDVRSEFQ (215 aa)). Ig-like C2-type domains follow at residues 41 to 108 (HATD…TPHG) and 120 to 220 (PVVH…MLLV). 2 N-linked (GlcNAc...) asparagine glycosylation sites follow: asparagine 83 and asparagine 193. Cysteine 155 and cysteine 202 are disulfide-bonded. The chain crosses the membrane as a helical span at residues 233–253 (WVYPLAVILITIFLLVVIIVF). The Cytoplasmic portion of the chain corresponds to 254-265 (CEWRNKKSTSKA).

In terms of tissue distribution, expressed in neurons and body wall muscles.

It localises to the cell membrane. Probably not involved in maintaining the position of ASI and ASH head neuron cell bodies and ventral nerve cord axons of PVQ, PVP, RMEV, AVK and HSN neurons. The polypeptide is Zwei Ig domain protein zig-1 (Caenorhabditis elegans).